We begin with the raw amino-acid sequence, 512 residues long: D-alanine--D-alanyl carrier protein ligase (512 aa).

ATP is bound at residue 152–153 (TS). Position 199 (aspartate 199) interacts with D-alanine. 294 to 299 (NAYGPT) lines the ATP pocket. Residue valine 303 coordinates D-alanine. Residues aspartate 385, 397–400 (YGGR), and lysine 499 each bind ATP. Lysine 499 contributes to the D-alanine binding site.

It belongs to the ATP-dependent AMP-binding enzyme family. DltA subfamily.

It localises to the cytoplasm. It carries out the reaction holo-[D-alanyl-carrier protein] + D-alanine + ATP = D-alanyl-[D-alanyl-carrier protein] + AMP + diphosphate. The protein operates within cell wall biogenesis; lipoteichoic acid biosynthesis. Its function is as follows. Catalyzes the first step in the D-alanylation of lipoteichoic acid (LTA), the activation of D-alanine and its transfer onto the D-alanyl carrier protein (Dcp) DltC. In an ATP-dependent two-step reaction, forms a high energy D-alanyl-AMP intermediate, followed by transfer of the D-alanyl residue as a thiol ester to the phosphopantheinyl prosthetic group of the Dcp. D-alanylation of LTA plays an important role in modulating the properties of the cell wall in Gram-positive bacteria, influencing the net charge of the cell wall. In Streptococcus pyogenes serotype M28 (strain MGAS6180), this protein is D-alanine--D-alanyl carrier protein ligase.